A 96-amino-acid polypeptide reads, in one-letter code: UPF0235 protein Helmi_20270 (96 aa).

This sequence belongs to the UPF0235 family.

This is UPF0235 protein Helmi_20270 from Heliobacterium modesticaldum (strain ATCC 51547 / Ice1).